A 244-amino-acid polypeptide reads, in one-letter code: Venom nerve growth factor 2 (244 aa).

Residues 1–18 (MSMLCYTLIIAFLIGTWA) form the signal peptide. A propeptide spanning residues 19-125 (APKSEDNVPL…TLNRNIRAKR (107 aa)) is cleaved from the precursor. Residues 47 to 66 (GLKTSRNTDQRHPAPKKAED) are compositionally biased toward basic and acidic residues. Positions 47 to 67 (GLKTSRNTDQRHPAPKKAEDQ) are disordered. 3 disulfides stabilise this stretch: Cys-139–Cys-205, Cys-181–Cys-233, and Cys-193–Cys-235.

The protein belongs to the NGF-beta family. Homodimer; non-covalently linked. In terms of tissue distribution, expressed by the venom gland.

The protein resides in the secreted. In terms of biological role, nerve growth factor is important for the development and maintenance of the sympathetic and sensory nervous systems. It stimulates division and differentiation of sympathetic and embryonic sensory neurons as well as basal forebrain cholinergic neurons in the brain. Its relevance in the snake venom is not clear. However, it has been shown to inhibit metalloproteinase-dependent proteolysis of platelet glycoprotein Ib alpha, suggesting a metalloproteinase inhibition to prevent metalloprotease autodigestion and/or protection against prey proteases. Binds a lipid between the two protein chains in the homodimer. The lipid-bound form promotes histamine relase from mouse mast cells, contrary to the lipid-free form. The chain is Venom nerve growth factor 2 from Tropidechis carinatus (Australian rough-scaled snake).